Here is a 217-residue protein sequence, read N- to C-terminus: Protein MODIFYING WALL LIGNIN-2 (217 aa).

Positions 1–23 (MHNLFLYSVVFSLGLVSFITCFA) are cleaved as a signal peptide. Over 24 to 51 (AEFKRTQKEDIRWDTERNCYVPGSHAFG) the chain is Cytoplasmic. A helical membrane pass occupies residues 52-72 (LGSAAVLCFCLAQIVGNIVVF). Residues 73-94 (RNHRTRTKREDGYKITDLTLPT) lie on the Extracellular side of the membrane. A helical transmembrane segment spans residues 95–115 (VLLLLSWSNFVVVVLILSTAI). Residues 116–137 (SMSRAQAYGEGWLDEDCYLVKD) are Cytoplasmic-facing. A helical transmembrane segment spans residues 138-158 (GVFAASGCLAILGLGALTISA). Residues 159–217 (TRIKVKKQQQLVQVVIKDQNQDQRRSMEEEQKHDEHQTNKSESVIHLVEEVSSTNISRI) are Extracellular-facing. N-linked (GlcNAc...) asparagine glycans are attached at residues Asn-197 and Asn-213.

This sequence belongs to the DESIGUAL family.

It is found in the cell membrane. In terms of biological role, together with MWL1, contributes to secondary cell wall biology, specifically lignin biosynthesis. The chain is Protein MODIFYING WALL LIGNIN-2 from Arabidopsis thaliana (Mouse-ear cress).